A 604-amino-acid chain; its full sequence is NRPS-independent siderophore synthetase-like protein ankE (604 aa).

It carries out the reaction cyclo(L-arginyl-(Z)-dehydro-4-O-homoseryl-tyrosyl) + citrate + ATP = NK13650 B + AMP + diphosphate + H(+). The protein operates within secondary metabolite biosynthesis. In terms of biological role, NRPS-independent siderophore synthetase-like protein; part of the ank cluster that mediates the biosynthesis of NK13650 C, a highly modified cyclo-arginine-tyrosine dipeptide. AnkE is responsible of the production of NK13650 B via ligation of citrate to the ankD product. Within the pathway, the cyclodipeptide synthase ankA acts as the scaffold-generating enzyme and is responsible for formation of the cyclo-Arg-Tyr diketopiperazine (cRY) from L-Arg and L-Tyr. The ankA product cRY is desaturated by the cytochrome P450 monooxygenase ankB to yield a dehydro-cyclodipeptide intermediate. The FAD-dependent monooxygenase ankC then installs the m-OH, ankD catalyzes the attachment of L-homoserine, and ankE ligates citrate to the ankD product to yield NK13650 B. The O-methyltransferase ankF is responsible for methylation of the C-17 phenol group of NK13650 B to produce NK13650 D. Amidation of NK13650 D with L-Asp by ankG then leads to the production of NK13650 C, whereas amidation of NK13650 B produces NK13650 A. The polypeptide is NRPS-independent siderophore synthetase-like protein ankE (Aspergillus thermomutatus (Neosartorya pseudofischeri)).